We begin with the raw amino-acid sequence, 443 residues long: ATP-dependent protease ATPase subunit HslU (443 aa).

Residues I19, 61–66 (GVGKTE), D256, E321, and R393 each bind ATP.

Belongs to the ClpX chaperone family. HslU subfamily. A double ring-shaped homohexamer of HslV is capped on each side by a ring-shaped HslU homohexamer. The assembly of the HslU/HslV complex is dependent on binding of ATP.

The protein resides in the cytoplasm. Its function is as follows. ATPase subunit of a proteasome-like degradation complex; this subunit has chaperone activity. The binding of ATP and its subsequent hydrolysis by HslU are essential for unfolding of protein substrates subsequently hydrolyzed by HslV. HslU recognizes the N-terminal part of its protein substrates and unfolds these before they are guided to HslV for hydrolysis. This is ATP-dependent protease ATPase subunit HslU from Ralstonia nicotianae (strain ATCC BAA-1114 / GMI1000) (Ralstonia solanacearum).